A 610-amino-acid chain; its full sequence is NTPase KAP family P-loop domain-containing protein 1 (610 aa).

A KAP NTPase domain is found at 1-414 (MQQEAAQRES…NTVPITVRLL (414 aa)). 3 helical membrane passes run 22 to 42 (AVSG…QPII), 118 to 138 (VCLG…LLYL), and 157 to 177 (VFGG…VYSV). The disordered stretch occupies residues 540 to 587 (ALKPPSPPKSPTRDTPHAAHRANSASRAPPSGRASGQAGEGHHTGDLA). Residues 560 to 575 (RANSASRAPPSGRASG) are compositionally biased toward low complexity.

The protein localises to the membrane. In Homo sapiens (Human), this protein is NTPase KAP family P-loop domain-containing protein 1 (NKPD1).